The sequence spans 247 residues: MIPYVKMMPYVNEYDTPECKTLAETAKKSIRTPESLGLDRCIQCGACTASCPAARFTDYSPRQIVKKVLENDRSVLESEMIWSCFYCYSCNLRCPRNNSPVTIVQVLRQMAINEGIRVEKLAYFLEIGEHLGENGASKVPGAGIKNMEKDLGERWIGIKRKLEPIRSELGLSARDVRNTHGEVQAILESTGYFEREKWIKARVQEKGIRGFLKTDRTGTSCTEKKKNSGDLGFESDREYTGQEALTV.

The 4Fe-4S ferredoxin-type domain maps to 32–62 (TPESLGLDRCIQCGACTASCPAARFTDYSPR). Cys41, Cys44, Cys47, Cys51, Cys84, Cys87, Cys90, and Cys94 together coordinate [4Fe-4S] cluster. A compositionally biased stretch (basic and acidic residues) spans 216–240 (RTGTSCTEKKKNSGDLGFESDREYT). The disordered stretch occupies residues 216–247 (RTGTSCTEKKKNSGDLGFESDREYTGQEALTV).

Belongs to the HdrC family. As to quaternary structure, the ferredoxin:CoB-CoM heterodisulfide reductase is composed of three subunits; HdrA1, HdrB1 and HdrC1. [4Fe-4S] cluster is required as a cofactor.

It localises to the cytoplasm. The catalysed reaction is coenzyme B + coenzyme M + 2 oxidized [2Fe-2S]-[ferredoxin] = coenzyme M-coenzyme B heterodisulfide + 2 reduced [2Fe-2S]-[ferredoxin] + 2 H(+). The protein operates within cofactor metabolism; coenzyme M-coenzyme B heterodisulfide reduction; coenzyme B and coenzyme M from coenzyme M-coenzyme B heterodisulfide: step 1/1. In terms of biological role, part of a complex that catalyzes the reversible reduction of CoM-S-S-CoB to the thiol-coenzymes H-S-CoM (coenzyme M) and H-S-CoB (coenzyme B). Probably involved in methylotrophic methanogenesis but not in aceticlastic methanogenesis. In Methanosarcina acetivorans (strain ATCC 35395 / DSM 2834 / JCM 12185 / C2A), this protein is Ferredoxin:CoB-CoM heterodisulfide reductase subunit C.